Consider the following 140-residue polypeptide: MLDSQEIQAILPHRYPMLLIDRVLSFEPGEFAIARKNVSINEAVFQGHFPGNPVLPGVFILEAMAQTGAVALLTLDQFKGRTAFFGGVKSAKFRRVVRPGDTLEIKVTLEKLKDRIGVGKAIATVDGEKACTAELTFIIE.

Histidine 48 is a catalytic residue.

It belongs to the thioester dehydratase family. FabZ subfamily.

The protein localises to the cytoplasm. It carries out the reaction a (3R)-hydroxyacyl-[ACP] = a (2E)-enoyl-[ACP] + H2O. Functionally, involved in unsaturated fatty acids biosynthesis. Catalyzes the dehydration of short chain beta-hydroxyacyl-ACPs and long chain saturated and unsaturated beta-hydroxyacyl-ACPs. The polypeptide is 3-hydroxyacyl-[acyl-carrier-protein] dehydratase FabZ (Latilactobacillus sakei subsp. sakei (strain 23K) (Lactobacillus sakei subsp. sakei)).